Here is a 465-residue protein sequence, read N- to C-terminus: Ribulose bisphosphate carboxylase large chain (465 aa).

Lys-4 bears the N6,N6,N6-trimethyllysine mark. Substrate is bound by residues Asn-113 and Thr-163. Residue Lys-165 is the Proton acceptor of the active site. Lys-167 contributes to the substrate binding site. Mg(2+) is bound by residues Lys-191, Asp-193, and Glu-194. Residue Lys-191 is modified to N6-carboxylysine. His-284 acts as the Proton acceptor in catalysis. Positions 285, 317, and 369 each coordinate substrate.

The protein belongs to the RuBisCO large chain family. Type I subfamily. In terms of assembly, heterohexadecamer of 8 large chains and 8 small chains. Requires Mg(2+) as cofactor.

The protein resides in the plastid. It localises to the chloroplast. It carries out the reaction 2 (2R)-3-phosphoglycerate + 2 H(+) = D-ribulose 1,5-bisphosphate + CO2 + H2O. The enzyme catalyses D-ribulose 1,5-bisphosphate + O2 = 2-phosphoglycolate + (2R)-3-phosphoglycerate + 2 H(+). Its function is as follows. RuBisCO catalyzes two reactions: the carboxylation of D-ribulose 1,5-bisphosphate, the primary event in carbon dioxide fixation, as well as the oxidative fragmentation of the pentose substrate in the photorespiration process. Both reactions occur simultaneously and in competition at the same active site. This is Ribulose bisphosphate carboxylase large chain from Sarracenia flava (Yellow pitcher plant).